The following is a 228-amino-acid chain: Lipoprotein-releasing system ATP-binding protein LolD (228 aa).

The ABC transporter domain occupies 7-228; the sequence is LNCQNLTKDY…MQDGVLRPEM (222 aa). 43 to 50 serves as a coordination point for ATP; the sequence is GSSGSGKS.

Belongs to the ABC transporter superfamily. Lipoprotein translocase (TC 3.A.1.125) family. As to quaternary structure, the complex is composed of two ATP-binding proteins (LolD) and two transmembrane proteins (LolC and LolE).

Its subcellular location is the cell inner membrane. Part of the ABC transporter complex LolCDE involved in the translocation of mature outer membrane-directed lipoproteins, from the inner membrane to the periplasmic chaperone, LolA. Responsible for the formation of the LolA-lipoprotein complex in an ATP-dependent manner. This is Lipoprotein-releasing system ATP-binding protein LolD from Mannheimia succiniciproducens (strain KCTC 0769BP / MBEL55E).